Reading from the N-terminus, the 318-residue chain is MNLLNLFTYVIPIAICIILPIFIIVTHFQIKSLNKAVTSFNKGDRSNALEILSKLVKSPIKNVKANAYITRERIYFYSRDFELSLRDLLQAIKLRPKTINDVYSFALSYHILGEPERALKYFLRAVELQPNVGISYENLAWFYYLTGKYDKAIENFEKAISMGSTNSVYRSLGITYAKIGDYKKSEEYLKKALDAEPEKPSTHIYFSYLKRKTNDIKLAKEYALKAIELNKNNFDGYKNLAEVNLAEDDYDGFYKNLEIFLEKINFVTNGEDFNDEVYDKVKDNEKFKELIAKTKVIKFKDLGIEIDDKKILNGKFLV.

4 TPR repeats span residues 65-98 (ANAY…RPKT), 99-132 (INDV…QPNV), 133-166 (GISY…GSTN), and 167-199 (SVYR…EPEK).

In terms of biological role, transcriptional repressor of the sol locus (adhE/aad, ctfA, ctfB and adc) genes for butanol and acetone formation. The chain is Sol locus transcriptional repressor (solR) from Clostridium acetobutylicum (strain ATCC 824 / DSM 792 / JCM 1419 / IAM 19013 / LMG 5710 / NBRC 13948 / NRRL B-527 / VKM B-1787 / 2291 / W).